The following is a 415-amino-acid chain: Squalene synthase 1 (415 aa).

A run of 2 helical transmembrane segments spans residues 281 to 301 and 391 to 411; these read AIFR…ALCF and LIAI…SNLL.

It belongs to the phytoene/squalene synthase family. Mg(2+) serves as cofactor. The cofactor is Mn(2+). In terms of tissue distribution, mostly expressed in the shoot apex (buds) and roots, and, to a lower extent, in stems, leaves, flowers and seeds.

The protein resides in the endoplasmic reticulum membrane. The enzyme catalyses 2 (2E,6E)-farnesyl diphosphate + NADH + H(+) = squalene + 2 diphosphate + NAD(+). The catalysed reaction is 2 (2E,6E)-farnesyl diphosphate + NADPH + H(+) = squalene + 2 diphosphate + NADP(+). The protein operates within terpene metabolism; lanosterol biosynthesis; lanosterol from farnesyl diphosphate: step 1/3. Its function is as follows. Component of the triterpene saponins (e.g. ginsenosides or panaxosides) and phytosterols biosynthetic pathways. Catalyzes the biosynthesis of squalene. The sequence is that of Squalene synthase 1 from Panax ginseng (Korean ginseng).